We begin with the raw amino-acid sequence, 479 residues long: FAD-dependent monooxygenase atmM (479 aa).

A helical membrane pass occupies residues I10–I30. Positions 36, 50, 109, 309, and 322 each coordinate FAD. A helical transmembrane segment spans residues W445–I465.

This sequence belongs to the paxM FAD-dependent monooxygenase family. FAD is required as a cofactor.

It is found in the membrane. The protein operates within secondary metabolite biosynthesis. FAD-dependent monooxygenase; part of the ATM1 gene cluster that mediates the biosynthesis of aflatrem, a tremorgenic mycotoxin with acute neurotoxic effects. Synthesis of geranylgeranyl diphosphate (GGPP) by AtmG (a GGPP synthase) precedes condensation of GGPP with indole 3-glycerol phosphate, followed by epoxidation and cyclization by AtmM (a FAD-dependent monooxygenase) and AtmC (a prenyltransferase) to produce paspaline. AtmB is also essential for paspaline production, but its exact role has not been identified yet. AtmP, a cytochrome P450 monooxygenase, subsequently converts paspaline to 13-desoxypaxilline via PC-M6 by removal of the C-30 methyl group and oxidation at C-10. AtmQ, a cytochrome P450 monooxygenase, then catalyzes the oxidation of 13-desoxypaxilline, first at C-7 to produce paspalicine and then at C-13 to form paspalinine. Finally, AtmD prenylates paspalinine to form aflatrem. The protein is FAD-dependent monooxygenase atmM of Aspergillus flavus.